Here is a 2126-residue protein sequence, read N- to C-terminus: Phthioceranic/hydroxyphthioceranic acid synthase (2126 aa).

A Ketosynthase family 3 (KS3) domain is found at 24–447 (VTPVAVIGMA…GTNVHAVVEQ (424 aa)). The active-site Acyl-thioester intermediate; for beta-ketoacyl synthase activity is the Cys196. Residues His331 and His367 each act as for beta-ketoacyl synthase activity in the active site. The linker domain (LD) stretch occupies residues 449–549 (PQTEAQPHAA…VYQPAVGQDD (101 aa)). The acyltransferase (AT) stretch occupies residues 550 to 849 (RGPVWLFSGQ…VAALAGMRRE (300 aa)). Ser641 acts as the Acyl-ester intermediate; for acyltransferase activity in catalysis. Residues 909-1191 (STVAVHPLLG…LAVCGLRIGT (283 aa)) form a dehydratase (DH) region. The segment at 914 to 1032 (HPLLGAHVRL…RRASAVLQQV (119 aa)) is N-terminal hotdog fold. In terms of domain architecture, PKS/mFAS DH spans 914-1198 (HPLLGAHVRL…IGTGVSERDK (285 aa)). The active-site Proton acceptor; for dehydratase activity is the His947. The segment at 1051-1198 (PCRVDGEDLR…IGTGVSERDK (148 aa)) is C-terminal hotdog fold. Asp1115 (proton donor; for dehydratase activity) is an active-site residue. The pseudo beta-ketoacyl reductase (PsiKR) stretch occupies residues 1227–1398 (KWLLISDCAA…SEEDETAWRD (172 aa)). Positions 1426-1750 (SGMRLQIRTP…EHTGKLVLHI (325 aa)) are enoylreductase (ER). The beta-ketoacyl reductase (KR) stretch occupies residues 1772–2019 (GSYIITGGLG…AERSRFFEVF (248 aa)). NADP(+) contacts are provided by residues 1780–1783 (LGGL), 1803–1806 (SRTQ), 1831–1832 (DI), and 1904–1905 (FS). The region spanning 2040–2126 (DEWPARLRQL…DAPAAALSSQ (87 aa)) is the Carrier domain. Ser2075 carries the O-(pantetheine 4'-phosphoryl)serine modification.

Pantetheine 4'-phosphate is required as a cofactor.

It carries out the reaction hexadecanoyl-[(hydroxy)phthioceranic acid synthase] + 7 (S)-methylmalonyl-CoA + 14 NADPH + 21 H(+) = C37-phthioceranyl-[(hydroxy)phthioceranic acid synthase] + 7 CO2 + 14 NADP(+) + 7 CoA + 7 H2O. The enzyme catalyses hexadecanoyl-[(hydroxy)phthioceranic acid synthase] + 8 (S)-methylmalonyl-CoA + 16 NADPH + 24 H(+) = C40-phthioceranyl-[(hydroxy)phthioceranic acid synthase] + 8 CO2 + 16 NADP(+) + 8 CoA + 8 H2O. The sequence is that of Phthioceranic/hydroxyphthioceranic acid synthase (pks2) from Mycobacterium bovis (strain BCG / Pasteur 1173P2).